Here is a 162-residue protein sequence, read N- to C-terminus: Phosphopantetheine adenylyltransferase (162 aa).

Serine 11 contributes to the substrate binding site. Residues 11–12 (SF) and histidine 19 contribute to the ATP site. Substrate contacts are provided by lysine 43, valine 76, and arginine 90. Residues 91 to 93 (GLR), glutamate 101, and 126 to 132 (LKFVSSS) each bind ATP.

It belongs to the bacterial CoaD family. In terms of assembly, homohexamer. Mg(2+) serves as cofactor.

The protein resides in the cytoplasm. The catalysed reaction is (R)-4'-phosphopantetheine + ATP + H(+) = 3'-dephospho-CoA + diphosphate. The protein operates within cofactor biosynthesis; coenzyme A biosynthesis; CoA from (R)-pantothenate: step 4/5. In terms of biological role, reversibly transfers an adenylyl group from ATP to 4'-phosphopantetheine, yielding dephospho-CoA (dPCoA) and pyrophosphate. The protein is Phosphopantetheine adenylyltransferase of Streptococcus suis (strain 05ZYH33).